We begin with the raw amino-acid sequence, 196 residues long: Fucoxanthin-chlorophyll a-c binding protein A, chloroplastic (196 aa).

A chloroplast-targeting transit peptide spans 1 to 31 (MKFAVFASLLASRAAFAPAQQSARTSVATNM). The next 3 helical transmembrane spans lie at 73 to 94 (ICML…PGDI), 114 to 134 (VPGA…IAVM), and 174 to 196 (GRAA…SILP).

This sequence belongs to the fucoxanthin chlorophyll protein family. As to quaternary structure, the LHC complex of chromophytic algae is composed of fucoxanthin, chlorophyll A and C bound non-covalently by fucoxanthin chlorophyll proteins (FCPs). The ratio of the pigments in LHC; fucoxanthin: chlorophyll C: chlorophyll A; (0.6-1): (0.1-0.3): (1).

The protein resides in the plastid. It is found in the chloroplast thylakoid membrane. Functionally, the light-harvesting complex (LHC) functions as a light receptor, it captures and delivers excitation energy to photosystems with which it is closely associated. Energy is transferred from the carotenoid and chlorophyll C (or B) to chlorophyll A and the photosynthetic reaction centers where it is used to synthesize ATP and reducing power. This Phaeodactylum tricornutum (Diatom) protein is Fucoxanthin-chlorophyll a-c binding protein A, chloroplastic (FCPA).